A 246-amino-acid chain; its full sequence is 3-deoxy-manno-octulosonate cytidylyltransferase (246 aa).

This sequence belongs to the KdsB family.

It localises to the cytoplasm. The catalysed reaction is 3-deoxy-alpha-D-manno-oct-2-ulosonate + CTP = CMP-3-deoxy-beta-D-manno-octulosonate + diphosphate. Its pathway is nucleotide-sugar biosynthesis; CMP-3-deoxy-D-manno-octulosonate biosynthesis; CMP-3-deoxy-D-manno-octulosonate from 3-deoxy-D-manno-octulosonate and CTP: step 1/1. It functions in the pathway bacterial outer membrane biogenesis; lipopolysaccharide biosynthesis. Its function is as follows. Activates KDO (a required 8-carbon sugar) for incorporation into bacterial lipopolysaccharide in Gram-negative bacteria. The polypeptide is 3-deoxy-manno-octulosonate cytidylyltransferase (Rickettsia felis (strain ATCC VR-1525 / URRWXCal2) (Rickettsia azadi)).